The primary structure comprises 355 residues: Peptide chain release factor 1 (355 aa).

Residue glutamine 233 is modified to N5-methylglutamine.

It belongs to the prokaryotic/mitochondrial release factor family. Post-translationally, methylated by PrmC. Methylation increases the termination efficiency of RF1.

The protein resides in the cytoplasm. Its function is as follows. Peptide chain release factor 1 directs the termination of translation in response to the peptide chain termination codons UAG and UAA. This is Peptide chain release factor 1 from Clostridium tetani (strain Massachusetts / E88).